The following is a 209-amino-acid chain: uncharacterized protein (209 aa).

This is an uncharacterized protein from Klebsiella pneumoniae.